Consider the following 435-residue polypeptide: 5-hydroxybenzimidazole synthase (435 aa).

Residues Met-95, Tyr-124, His-163, Ser-186 to Gly-188, Asn-227 to Arg-230, and Glu-266 contribute to the substrate site. Residue His-270 coordinates Zn(2+). Tyr-293 contributes to the substrate binding site. His-334 is a binding site for Zn(2+). The [4Fe-4S] cluster site is built by Cys-410, Cys-413, and Cys-417.

It belongs to the ThiC family. 5-hydroxybenzimidazole synthase subfamily. Homodimer. [4Fe-4S] cluster is required as a cofactor.

The catalysed reaction is 5-amino-1-(5-phospho-beta-D-ribosyl)imidazole + AH2 + S-adenosyl-L-methionine = 5-hydroxybenzimidazole + 5'-deoxyadenosine + formate + L-methionine + A + NH4(+) + phosphate + 2 H(+). Catalyzes the conversion of aminoimidazole ribotide (AIR) to 5-hydroxybenzimidazole (5-HBI) in a radical S-adenosyl-L-methionine (SAM)-dependent reaction. Is thus involved in the anaerobic biosynthesis of the benzimidazole lower axial ligand of the cobamide produced by G.sulfurreducens. The chain is 5-hydroxybenzimidazole synthase from Geobacter sulfurreducens (strain ATCC 51573 / DSM 12127 / PCA).